Here is a 466-residue protein sequence, read N- to C-terminus: Vimentin (466 aa).

Low complexity-rich tracts occupy residues Met-1–Arg-13 and Thr-20–Thr-33. The interval Met-1 to Thr-33 is disordered. Ser-2 carries the N-acetylserine modification. The interval Ser-2–Glu-95 is head. Ser-5 bears the Phosphoserine mark. Ser-7 is modified (phosphoserine; by PKA and PKC; alternate). Ser-7 is a glycosylation site (O-linked (GlcNAc) serine; alternate). Ser-8 is modified (phosphoserine). Residues Ser-9 and Ser-10 each carry the phosphoserine; by PKC modification. Residue Thr-20 is modified to Phosphothreonine. Phosphoserine occurs at positions 25 and 26. O-linked (GlcNAc) threonine glycosylation is present at Thr-33. Ser-34 is a glycosylation site (O-linked (GlcNAc) serine; alternate). At Ser-34 the chain carries Phosphoserine; by PKC; alternate. The residue at position 39 (Ser-39) is a Phosphoserine; by CaMK2, PKA, PKC and ROCK2. The residue at position 42 (Ser-42) is a Phosphoserine; by PKC. Residue Ser-47 is modified to Phosphoserine; by PKA. Ser-49 and Ser-51 each carry phosphoserine. At Tyr-53 the chain carries Phosphotyrosine. A phosphoserine mark is found at Ser-55 and Ser-56. The residue at position 61 (Tyr-61) is a Phosphotyrosine. At Ser-66 the chain carries Phosphoserine; by PKA and PKC. At Ser-72 the chain carries Phosphoserine; by AURKB and ROCK2. Phosphoserine is present on residues Ser-73, Ser-83, and Ser-87. Positions Phe-96–Leu-131 are coil 1A. Positions Phe-96–Leu-131 form a coiled coil. The 309-residue stretch at Glu-103 to Ile-411 folds into the IF rod domain. A Glycyl lysine isopeptide (Lys-Gly) (interchain with G-Cter in SUMO2) cross-link involves residue Lys-104. Residue Tyr-117 is modified to Phosphotyrosine. Residues Lys-120, Lys-129, and Lys-139 each carry the N6-acetyllysine; alternate modification. Lys-120 and Lys-129 each carry N6-succinyllysine; alternate. Residues Lys-120, Lys-129, and Lys-139 each participate in a glycyl lysine isopeptide (Lys-Gly) (interchain with G-Cter in SUMO2); alternate cross-link. The interval Leu-132–Glu-153 is linker 1. Ser-144 carries the phosphoserine modification. The stretch at Met-154–Leu-245 forms a coiled coil. A coil 1B region spans residues Met-154 to Leu-245. Lys-168 carries the post-translational modification N6-acetyllysine. Residue Lys-188 is modified to N6-acetyllysine; alternate. Lys-188 bears the N6-succinyllysine; alternate mark. Ser-214 carries the phosphoserine modification. At Lys-223 the chain carries N6-acetyllysine; alternate. Lys-223 is covalently cross-linked (Glycyl lysine isopeptide (Lys-Gly) (interchain with G-Cter in SUMO2); alternate). The residue at position 226 (Ser-226) is a Phosphoserine. Lys-235 bears the N6-acetyllysine mark. A linker 12 region spans residues Gln-246–Ala-268. Lys-262 is covalently cross-linked (Glycyl lysine isopeptide (Lys-Gly) (interchain with G-Cter in SUMO2)). The interval Leu-269 to Glu-407 is coil 2. Lys-294 is modified (N6-acetyllysine; alternate). The residue at position 294 (Lys-294) is an N6-succinyllysine; alternate. A Glycyl lysine isopeptide (Lys-Gly) (interchain with G-Cter in SUMO2); alternate cross-link involves residue Lys-294. Ser-299 carries the post-translational modification Phosphoserine. A coiled-coil region spans residues Asn-303–Glu-407. A Glycyl lysine isopeptide (Lys-Gly) (interchain with G-Cter in SUMO2) cross-link involves residue Lys-313. Ser-325 carries the post-translational modification Phosphoserine. The short motif at Leu-326–Glu-329 is the [IL]-x-C-x-x-[DE] motif element. The residue at position 373 (Lys-373) is an N6-acetyllysine; alternate. Lys-373 is covalently cross-linked (Glycyl lysine isopeptide (Lys-Gly) (interchain with G-Cter in SUMO2); alternate). Positions Glu-408–Glu-466 are tail. Ser-409, Ser-412, Ser-419, and Ser-420 each carry phosphoserine. The residue at position 426 (Thr-426) is a Phosphothreonine. Phosphoserine is present on Ser-430. Position 436 is a phosphothreonine (Thr-436). Ser-438 carries the post-translational modification Phosphoserine. Lys-439 is covalently cross-linked (Glycyl lysine isopeptide (Lys-Gly) (interchain with G-Cter in SUMO2)). Lys-445 is subject to N6-acetyllysine; alternate. Residue Lys-445 is modified to N6-succinyllysine; alternate. Lys-445 is covalently cross-linked (Glycyl lysine isopeptide (Lys-Gly) (interchain with G-Cter in SUMO2); alternate). Lys-445 is covalently cross-linked (Glycyl lysine isopeptide (Lys-Gly) (interchain with G-Cter in SUMO1); alternate). Thr-446 and Thr-458 each carry phosphothreonine. Phosphoserine is present on Ser-459.

It belongs to the intermediate filament family. In terms of assembly, homomer assembled from elementary dimers. Identified in complexes that contain VIM, EZR, AHNAK, BFSP1, BFSP2, ANK2, PLEC, PRX and spectrin. Interacts with BCAS3. Interacts with LGSN. Interacts with SYNM. Interacts (via rod region) with PLEC (via CH 1 domain). Interacts with STK33. Interacts with LARP6. Interacts with RAB8B. Interacts with TOR1A; the interaction associates TOR1A with the cytoskeleton. Interacts with TOR1AIP1. Interacts with TOR1AIP1. Interacts with DIAPH1. Interacts with EPPK1; interaction is dependent of higher-order structure of intermediate filament. Interacts with the non-receptor tyrosine kinase SRMS; the interaction leads to phosphorylation of VIM. Interacts with NOD2. Interacts (via head region) with CORO1C. Interacts with HDGF. Interacts with PRKCE (via phorbol-ester/DAG-type 2 domain). Interacts with BFSP2. Interacts with PPL. Interacts with PKP1 and PKP2. Interacts with SCRIB (via PDZ domains); the interaction protects SCRIB from proteasomal degradation and facilitates SCRIB localization to intermediate filaments, the interaction is reduced by cell contact inhibition. In terms of processing, one of the most prominent phosphoproteins in various cells of mesenchymal origin. Phosphorylation is enhanced during cell division, at which time vimentin filaments are significantly reorganized. Phosphorylation by PKN1 inhibits the formation of filaments. Filament disassembly during mitosis is promoted by phosphorylation at Ser-55 as well as by nestin. Phosphorylated at Ser-56 by CDK5 during neutrophil secretion in the cytoplasm. Phosphorylated by STK33. Phosphorylated on tyrosine residues by SRMS. S-nitrosylation is induced by interferon-gamma and oxidatively-modified low-densitity lipoprotein (LDL(ox)) possibly implicating the iNOS-S100A8/9 transnitrosylase complex.

It localises to the cytoplasm. The protein localises to the cytoskeleton. It is found in the nucleus matrix. The protein resides in the cell membrane. In terms of biological role, vimentins are class-III intermediate filaments found in various non-epithelial cells, especially mesenchymal cells. Vimentin is attached to the nucleus, endoplasmic reticulum, and mitochondria, either laterally or terminally. Plays a role in cell directional movement, orientation, cell sheet organization and Golgi complex polarization at the cell migration front. Protects SCRIB from proteasomal degradation and facilitates its localization to intermediate filaments in a cell contact-mediated manner. Functionally, involved with LARP6 in the stabilization of type I collagen mRNAs for CO1A1 and CO1A2. This chain is Vimentin, found in Rattus norvegicus (Rat).